The sequence spans 265 residues: uncharacterized protein (265 aa).

Positions 143–205 (ATQKALKDSI…EKLIKSVEKA (63 aa)) form a coiled coil.

This is an uncharacterized protein from Aquifex aeolicus (strain VF5).